The following is a 679-amino-acid chain: MSAPKNEMYYSLLEWFKTLNLNAPHADAESLADGVALAQALNQFAPESFTDAWLSKIKASAVGSNWRLRMSNLKKVTQSVYDYYSDVLNYSLSDFSKPDLQSIAEKCDLGELERLLQLVLGCAVNCAEKQSYITEIMCLEEELQANIMRALQELEATRQASSAEGGVVSSLSRSSRTGNLDSKAVQEDRDALAQKCFETEKKMLLLIDEKTNLQQELHKLQQEFSRLEQHSTVIGDDGVSLGPVQTGSVRYNELRRQLDLLKEELLHSEGAREDLKLKAQQQDTDLLHMQMRIEELMKSSAEVTTLKDEVDVLRESNDKLKICEAQLDTYKKKLEDYNDLKKQVKILEERSADYVQQNAQFEEDAKRYANTKGQVELFKKEIQDLHAKLDAESSKNVKLEFDNKNLEGKNLALQRAKDSLLKERDNLREAVDELKCGQLSSNTALTGTTVSREMQPSATVEKLQRLEAENKALREGQGGQTALAQLLDDANKRCENLREQLKTANERILSLSHASQSDDPILKESEFGKQIKQLMELNEQKTLQLEEAVTQSTSLQCKVTQLETNLSAREQEILVYDAKYRKCVEKAKEVIKSIDPRIASALDASVLEKSSDLVEEEPKPKMSVMEEQLMTSAFYRLGVNAQRDAIDSKLAILMGSGQTFLARQRQSAPRKSLSAMKSK.

The Calponin-homology (CH) domain occupies 6 to 123; the sequence is NEMYYSLLEW…RLLQLVLGCA (118 aa). Coiled coils occupy residues 135-437 and 480-574; these read EIMC…LKCG and QTAL…QEIL.

This sequence belongs to the hook family. In terms of assembly, homodimer. Interacts with microtubules via its N-terminus.

It localises to the cytoplasm. It is found in the cytoskeleton. Its subcellular location is the endosome. The protein localises to the synapse. Involved in endocytic trafficking by stabilizing organelles of the endocytic pathway. Probably acts as a cytoskeletal linker protein required to tether endosome vesicles to the cytoskeleton. Involved in modulation of endocytosis at stages required for down-regulation of membrane proteins that control synapse size. Not involved in synaptic vesicle recycling. Required in R7 cells for boss endocytosis into multivesicular bodies (MVBs). Has a role in regulating adult longevity. The protein is Protein hook of Drosophila erecta (Fruit fly).